A 557-amino-acid polypeptide reads, in one-letter code: Formate--tetrahydrofolate ligase 2 (557 aa).

Thr66–Thr73 contributes to the ATP binding site.

This sequence belongs to the formate--tetrahydrofolate ligase family.

The catalysed reaction is (6S)-5,6,7,8-tetrahydrofolate + formate + ATP = (6R)-10-formyltetrahydrofolate + ADP + phosphate. It functions in the pathway one-carbon metabolism; tetrahydrofolate interconversion. This is Formate--tetrahydrofolate ligase 2 from Streptococcus pyogenes serotype M12 (strain MGAS9429).